A 651-amino-acid chain; its full sequence is Macrolide export ATP-binding/permease protein MacB (651 aa).

Residues 2 to 239 (IEIVNVTKTY…PQMPQGGMEA (238 aa)) enclose the ABC transporter domain. 38–45 (GASGSGKS) is an ATP binding site. 4 helical membrane passes run 269–289 (FLSVLGILVGVASVIAMMALG), 532–552 (IAAISLVVGGIGIMNIMLVSV), 589–609 (IIGIVVGVGVSVMLSAFAGWA), and 614–634 (MFSVVLATGFSVLIGLFFGLW).

This sequence belongs to the ABC transporter superfamily. Macrolide exporter (TC 3.A.1.122) family. Homodimer.

The protein localises to the cell inner membrane. Non-canonical ABC transporter that contains transmembrane domains (TMD), which form a pore in the inner membrane, and an ATP-binding domain (NBD), which is responsible for energy generation. Confers resistance against macrolides. The protein is Macrolide export ATP-binding/permease protein MacB of Chlorobaculum tepidum (strain ATCC 49652 / DSM 12025 / NBRC 103806 / TLS) (Chlorobium tepidum).